Here is a 180-residue protein sequence, read N- to C-terminus: UPF0340 protein BLi03936/BL03990 (180 aa).

It belongs to the UPF0340 family.

This is UPF0340 protein BLi03936/BL03990 from Bacillus licheniformis (strain ATCC 14580 / DSM 13 / JCM 2505 / CCUG 7422 / NBRC 12200 / NCIMB 9375 / NCTC 10341 / NRRL NRS-1264 / Gibson 46).